Consider the following 764-residue polypeptide: MSTNSFHDYVDLKSRTNTRQFSDDEEFTTPPKLSNFGSALLSHTEKTSASEILSSHNNDKIANRLEEMDRSSSRSHPPPSMGNLTSGHTSTSSHSTLFGRYLRNNHQTSMTTMNTSDIEINVGNSLDKSFERIRNLRQNMKEDITAKYAERRSKRFLISNRTTKLGPAKRAMTLTNIFDEDVPNSPNQPINARETVELPLEDSHQTNFKETKRNTDYDSIDFGDLNPIQYIKKHNLPTSDLPLISQIYFDKQREENRQAALRKHSSRELLYKSRSSSSSLSSNNLLANKDNSITSNNGSQPRRKVSTGSSSSKSSIEIRRALKENIDTSNNSNFNSPIHKIYKGISRNKDSDSEKREVLRNISINANHADNLLQQENKRLKRSLDDAITNENINSKNLEVFYHRPAPKPPVTKKVEIVEPAKSASLSNNRNIITVNDSQYEKIELLGRGGSSRVYKVKGSGNRVYALKRVSFDAFDDSSIDGFKGEIELLEKLKDQKRVIQLLDYEMGDGLLYLIMECGDHDLSQILNQRSGMPLDFNFVRFYTKEMLLCIKVVHDAGIVHSDLKPANFVLVKGILKIIDFGIANAVPEHTVNIYRETQIGTPNYMAPEALVAMNYTQNSENQHEGNKWKVGRPSDMWSCGCIIYQMIYGKPPYGSFQGQNRLLAIMNPDVKIPFPEHTSNNEKIPKSAIELMKACLYRNPDKRWTVDKVLSSTFLQPFMISGSIMEDLIRNAVRYGSEKPHISQDDLNDVVDTVLRKFADYKI.

Disordered stretches follow at residues 66 to 95, 197 to 216, and 258 to 316; these read EEMDRSSSRSHPPPSMGNLTSGHTSTSSHS, ELPLEDSHQTNFKETKRNTD, and QAAL…KSSI. Residues 85–95 are compositionally biased toward low complexity; the sequence is TSGHTSTSSHS. The segment covering 201 to 216 has biased composition (basic and acidic residues); that stretch reads EDSHQTNFKETKRNTD. 2 stretches are compositionally biased toward low complexity: residues 272-292 and 306-315; these read KSRSSSSSLSSNNLLANKDNS and STGSSSSKSS. A Protein kinase domain is found at 440–720; the sequence is YEKIELLGRG…LSSTFLQPFM (281 aa). ATP-binding positions include 446–454 and K468; that span reads LGRGGSSRV. Residue D563 is the Proton acceptor of the active site.

Belongs to the protein kinase superfamily. Ser/Thr protein kinase family. Post-translationally, autophosphorylated.

It catalyses the reaction L-seryl-[protein] + ATP = O-phospho-L-seryl-[protein] + ADP + H(+). The catalysed reaction is L-threonyl-[protein] + ATP = O-phospho-L-threonyl-[protein] + ADP + H(+). The enzyme catalyses L-tyrosyl-[protein] + ATP = O-phospho-L-tyrosyl-[protein] + ADP + H(+). In terms of biological role, involved in mitotic spindle assembly checkpoint signaling, a process that delays anaphase until chromosomes are bioriented on the spindle, and in the repair of incorrect mitotic kinetochore-spindle microtubule attachments. Phosphorylates SPC105 on MELT motifs; phosphorylation is required for recruitment of the BUB1-BUB3 complex to kinetochores. Phosphorylates CNN1, which contributes to the enrichment of CNN1 on anaphase kinetochores. Implicated in spindle pole body (SPD) duplication. Phosphorylates the SPC29 and SPC110 spindle pole body components. In Saccharomyces cerevisiae (strain ATCC 204508 / S288c) (Baker's yeast), this protein is Serine/threonine-protein kinase MPS1 (MPS1).